The sequence spans 176 residues: Ribosome maturation factor RimM (176 aa).

The PRC barrel domain maps to 93–166; it reads ADEYYHADLI…QVVIEPPNEI (74 aa).

The protein belongs to the RimM family. In terms of assembly, binds ribosomal protein uS19.

The protein resides in the cytoplasm. Its function is as follows. An accessory protein needed during the final step in the assembly of 30S ribosomal subunit, possibly for assembly of the head region. Essential for efficient processing of 16S rRNA. May be needed both before and after RbfA during the maturation of 16S rRNA. It has affinity for free ribosomal 30S subunits but not for 70S ribosomes. In Rhodopseudomonas palustris (strain ATCC BAA-98 / CGA009), this protein is Ribosome maturation factor RimM.